The following is a 265-amino-acid chain: Hydroxyethylthiazole kinase 1 (265 aa).

Substrate is bound at residue M39. ATP contacts are provided by K115 and T168. G195 lines the substrate pocket.

It belongs to the Thz kinase family. Mg(2+) is required as a cofactor.

It carries out the reaction 5-(2-hydroxyethyl)-4-methylthiazole + ATP = 4-methyl-5-(2-phosphooxyethyl)-thiazole + ADP + H(+). Its pathway is cofactor biosynthesis; thiamine diphosphate biosynthesis; 4-methyl-5-(2-phosphoethyl)-thiazole from 5-(2-hydroxyethyl)-4-methylthiazole: step 1/1. Its function is as follows. Catalyzes the phosphorylation of the hydroxyl group of 4-methyl-5-beta-hydroxyethylthiazole (THZ). This chain is Hydroxyethylthiazole kinase 1, found in Clostridium botulinum (strain Loch Maree / Type A3).